A 1006-amino-acid polypeptide reads, in one-letter code: Phosphatidylinositol-3,5-bisphosphate 3-phosphatase MTMR3 (1006 aa).

Low complexity predominate over residues 1 to 10 (MTVTSSAAID). The tract at residues 1–29 (MTVTSSAAIDIGGGGGGRRSDRLDSDRTS) is disordered. Basic and acidic residues predominate over residues 18–29 (RRSDRLDSDRTS). Residues 224–630 (AWKFSEAVDE…INLRVWHEVF (407 aa)) enclose the Myotubularin phosphatase domain. Positions 377, 402, and 403 each coordinate a 1,2-diacyl-sn-glycero-3-phospho-(1D-myo-inositol-3,5-bisphosphate). Residues N377, N402, and I403 each contribute to the a 1,2-diacyl-sn-glycero-3-phospho-(1D-myo-inositol-3-phosphate) site. Residue C463 is the Phosphocysteine intermediate of the active site. A 1,2-diacyl-sn-glycero-3-phospho-(1D-myo-inositol-3,5-bisphosphate) contacts are provided by S464, D465, G466, W467, D468, R469, K505, and R509. A 1,2-diacyl-sn-glycero-3-phospho-(1D-myo-inositol-3-phosphate)-binding residues include S464, D465, G466, W467, D468, and R469. Residue R509 coordinates a 1,2-diacyl-sn-glycero-3-phospho-(1D-myo-inositol-3-phosphate). The tract at residues 641-705 (FSPKEERPLS…PSDNTNSLPM (65 aa)) is disordered. The span at 651–705 (GCTTPMNTSTSTNLVKSKSSESINSLNVDGSAKESSQQHPTCSTTPSDNTNSLPM) shows a compositional bias: polar residues. Residues 818–883 (EGESGHCAYC…ACDSCYDSMH (66 aa)) form an FYVE-type zinc finger. Residues C824, C827, C845, C848, C853, C856, C875, and C878 each coordinate Zn(2+). Residues 886–1006 (DLKLSSSSTT…DVLDVNEQPL (121 aa)) are disordered. Composition is skewed to low complexity over residues 890–901 (SSSSTTTTSSST) and 913–926 (DNNS…VSEN). Composition is skewed to basic and acidic residues over residues 933 to 954 (VEEK…ETKC) and 976 to 985 (HSRDPLKSID).

It belongs to the protein-tyrosine phosphatase family. Non-receptor class myotubularin subfamily. Expressed in the body wall muscle and in eggs. Expressed in head neurons. Expressed in the intestine. Expressed in pharyngeal cells, vulval muscle cells and cells of the tail region.

It localises to the cytoplasm. It is found in the membrane. It catalyses the reaction a 1,2-diacyl-sn-glycero-3-phospho-(1D-myo-inositol-3,5-bisphosphate) + H2O = a 1,2-diacyl-sn-glycero-3-phospho-(1D-myo-inositol-5-phosphate) + phosphate. It carries out the reaction a 1,2-diacyl-sn-glycero-3-phospho-(1D-myo-inositol-3-phosphate) + H2O = a 1,2-diacyl-sn-glycero-3-phospho-(1D-myo-inositol) + phosphate. The enzyme catalyses 1,2-dihexadecanoyl-sn-glycero-3-phospho-(1D-myo-inositol-3-phosphate) + H2O = 1,2-dihexadecanoyl-sn-glycero-3-phospho-(1D-myo-inositol) + phosphate. The catalysed reaction is 1,2-dihexadecanoyl-sn-glycero-3-phospho-(1D-myo-inositol-3,5-phosphate) + H2O = 1,2-dihexadecanoyl-sn-glycero-3-phospho-(1D-myo-inositol-5-phosphate) + phosphate. It catalyses the reaction 1,2-dioctanoyl-sn-glycero-3-phospho-(1-D-myo-inositol-3-phosphate) + H2O = 1,2-dioctanoyl-sn-glycero-3-phospho-(1D-myo-inositol) + phosphate. Inhibited by sodium vanadate and peroxide. In terms of biological role, preferentially dephosphorylates phosphatidylinositol 3-phosphate (PI3P), and has some activity towards phosphatidylinositol 3,5-bisphosphate (PI35P). Positively regulates autophagy and is recruited to autophagosomes by PI3P where it catalyzes PI3P turnover to promote autophagosome maturation. Thought to have a role in maintenance of muscle function. Involved in locomotion and lifespan determination. The polypeptide is Phosphatidylinositol-3,5-bisphosphate 3-phosphatase MTMR3 (Caenorhabditis elegans).